A 294-amino-acid polypeptide reads, in one-letter code: 4-hydroxy-tetrahydrodipicolinate synthase (294 aa).

Thr-47 provides a ligand contact to pyruvate. The active-site Proton donor/acceptor is the Tyr-135. The active-site Schiff-base intermediate with substrate is Lys-163. Val-205 is a binding site for pyruvate.

It belongs to the DapA family. As to quaternary structure, homotetramer; dimer of dimers.

It is found in the cytoplasm. The catalysed reaction is L-aspartate 4-semialdehyde + pyruvate = (2S,4S)-4-hydroxy-2,3,4,5-tetrahydrodipicolinate + H2O + H(+). The protein operates within amino-acid biosynthesis; L-lysine biosynthesis via DAP pathway; (S)-tetrahydrodipicolinate from L-aspartate: step 3/4. Catalyzes the condensation of (S)-aspartate-beta-semialdehyde [(S)-ASA] and pyruvate to 4-hydroxy-tetrahydrodipicolinate (HTPA). This chain is 4-hydroxy-tetrahydrodipicolinate synthase, found in Rickettsia canadensis (strain McKiel).